The sequence spans 284 residues: Probable endonuclease 4 (284 aa).

Zn(2+) is bound by residues His-66, His-106, Glu-142, Asp-176, His-179, His-213, Asp-226, His-228, and Glu-258.

Belongs to the AP endonuclease 2 family. Requires Zn(2+) as cofactor.

It carries out the reaction Endonucleolytic cleavage to 5'-phosphooligonucleotide end-products.. Endonuclease IV plays a role in DNA repair. It cleaves phosphodiester bonds at apurinic or apyrimidinic (AP) sites, generating a 3'-hydroxyl group and a 5'-terminal sugar phosphate. This Natranaerobius thermophilus (strain ATCC BAA-1301 / DSM 18059 / JW/NM-WN-LF) protein is Probable endonuclease 4.